The primary structure comprises 359 residues: Protein mab-21-like 2 (359 aa).

This sequence belongs to the mab-21 family. As to expression, expressed in the adult cerebellum and eye, with lower levels in the adult forebrain. In embryos at 10.5 days post-coitum strongly expressed in the rostral and distal regions of the developing neural retina, with no expression immediately adjacent to the closing optic fissure. Expression is also observed in the dorsal and ventral aspects of the developing forelimb bud and in the developing pharyngeal arches, as well as in the midbrain.

The protein resides in the nucleus. It is found in the cytoplasm. In terms of biological role, required for several aspects of embryonic development including normal development of the eye, notochord, neural tube and other organ tissues, and for embryonic turning. The chain is Protein mab-21-like 2 (Mab21l2) from Mus musculus (Mouse).